We begin with the raw amino-acid sequence, 938 residues long: Isoleucine--tRNA ligase (938 aa).

The 'HIGH' region motif lies at 58 to 68; that stretch reads PYANGSIHIGH. Residue Glu-561 participates in L-isoleucyl-5'-AMP binding. The 'KMSKS' region signature appears at 602 to 606; that stretch reads KMSKS. An ATP-binding site is contributed by Lys-605. Zn(2+) is bound by residues Cys-901, Cys-904, Cys-921, and Cys-924.

Belongs to the class-I aminoacyl-tRNA synthetase family. IleS type 1 subfamily. As to quaternary structure, monomer. It depends on Zn(2+) as a cofactor.

It is found in the cytoplasm. The catalysed reaction is tRNA(Ile) + L-isoleucine + ATP = L-isoleucyl-tRNA(Ile) + AMP + diphosphate. In terms of biological role, catalyzes the attachment of isoleucine to tRNA(Ile). As IleRS can inadvertently accommodate and process structurally similar amino acids such as valine, to avoid such errors it has two additional distinct tRNA(Ile)-dependent editing activities. One activity is designated as 'pretransfer' editing and involves the hydrolysis of activated Val-AMP. The other activity is designated 'posttransfer' editing and involves deacylation of mischarged Val-tRNA(Ile). The sequence is that of Isoleucine--tRNA ligase from Citrobacter koseri (strain ATCC BAA-895 / CDC 4225-83 / SGSC4696).